The primary structure comprises 171 residues: Putative MucR family transcriptional regulatory protein y4pD (171 aa).

It belongs to the ros/MucR family.

This is Putative MucR family transcriptional regulatory protein y4pD from Sinorhizobium fredii (strain NBRC 101917 / NGR234).